We begin with the raw amino-acid sequence, 250 residues long: Uridylate kinase (250 aa).

19–22 (KLSG) provides a ligand contact to ATP. Residue G61 participates in UMP binding. Positions 62 and 66 each coordinate ATP. Residues D81 and 142-149 (TGNPFFTT) contribute to the UMP site. ATP is bound by residues T169, Q170, Y175, and D178.

This sequence belongs to the UMP kinase family. In terms of assembly, homohexamer.

It is found in the cytoplasm. The enzyme catalyses UMP + ATP = UDP + ADP. It functions in the pathway pyrimidine metabolism; CTP biosynthesis via de novo pathway; UDP from UMP (UMPK route): step 1/1. With respect to regulation, inhibited by UTP. Functionally, catalyzes the reversible phosphorylation of UMP to UDP. This chain is Uridylate kinase, found in Rhodospirillum rubrum (strain ATCC 11170 / ATH 1.1.1 / DSM 467 / LMG 4362 / NCIMB 8255 / S1).